The chain runs to 461 residues: V-type ATP synthase beta chain (461 aa).

This sequence belongs to the ATPase alpha/beta chains family.

Its function is as follows. Produces ATP from ADP in the presence of a proton gradient across the membrane. The V-type beta chain is a regulatory subunit. This is V-type ATP synthase beta chain from Streptococcus pneumoniae serotype 19F (strain G54).